A 528-amino-acid polypeptide reads, in one-letter code: Calcium-dependent protein kinase 17 (528 aa).

Positions 1–65 (MGNCCSHGRD…GPIGPVLGRP (65 aa)) are disordered. A lipid anchor (N-myristoyl glycine) is attached at G2. Low complexity predominate over residues 20-45 (NGASASNAANSTGPTAEASVPQSKHA). The 259-residue stretch at 73–331 (YSLGKELGRG…AAQVLNHPWI (259 aa)) folds into the Protein kinase domain. Residues 79-87 (LGRGQFGVT) and K102 contribute to the ATP site. D197 functions as the Proton acceptor in the catalytic mechanism. At S237 the chain carries Phosphoserine. The tract at residues 337–367 (APDVPLDNAVMSRLKQFKAMNNFKKVALRVI) is autoinhibitory domain. 4 consecutive EF-hand domains span residues 374 to 409 (EEIM…QGTR), 410 to 445 (LSEY…INRL), 446 to 481 (DREE…FGMN), and 485 to 516 (DIKE…GNPD). The Ca(2+) site is built by D387, D389, S391, T393, E398, D423, D425, N427, T429, E434, D459, D461, S463, Y465, E470, D494, D496, D498, R500, and E505.

The protein belongs to the protein kinase superfamily. Ser/Thr protein kinase family. CDPK subfamily.

Its subcellular location is the membrane. The enzyme catalyses L-seryl-[protein] + ATP = O-phospho-L-seryl-[protein] + ADP + H(+). The catalysed reaction is L-threonyl-[protein] + ATP = O-phospho-L-threonyl-[protein] + ADP + H(+). Activated by calcium. Autophosphorylation may play an important role in the regulation of the kinase activity. Functionally, may play a role in signal transduction pathways that involve calcium as a second messenger. This is Calcium-dependent protein kinase 17 (CPK17) from Arabidopsis thaliana (Mouse-ear cress).